The following is a 70-amino-acid chain: Small, acid-soluble spore protein 1 (70 aa).

Belongs to the alpha/beta-type SASP family.

In terms of biological role, SASP are bound to spore DNA. They are double-stranded DNA-binding proteins that cause DNA to change to an a-like conformation. They protect the DNA backbone from chemical and enzymatic cleavage and are thus involved in dormant spore's high resistance to UV light. This is Small, acid-soluble spore protein 1 (sasP-1) from Bacillus cereus.